A 170-amino-acid polypeptide reads, in one-letter code: MQVDEQRLRFRDAMASLAAAVNIVTTAGHAGRCGITATAVCSVTDTPPSVMVCINANSAMNPVFQGNGRLCINVLNHEQELMARHFAGMTGMAMEERFHQPCWQNGPLGQPVLNGALAGLEGEISEVQTIGTHLVYLVAIKNIILSQDGHGLIYFKRRFHPVRLEMEAPV.

Belongs to the non-flavoprotein flavin reductase family. HpaC subfamily. Homodimer. 4-HPA 3-monooxygenase consists of a reductase component HpaC and an oxygenase component HpaB.

It catalyses the reaction a reduced flavin + NAD(+) = an oxidized flavin + NADH + 2 H(+). It functions in the pathway aromatic compound metabolism; 4-hydroxyphenylacetate degradation; pyruvate and succinate semialdehyde from 4-hydroxyphenylacetate: step 1/7. Catalyzes the reduction of free flavins (FMN, FAD and riboflavin) by NADH. Subsequently, the reduced flavins diffuse to the large HpaB component or to other electron acceptors such as cytochrome c and Fe(3+) ion. This chain is 4-hydroxyphenylacetate 3-monooxygenase reductase component (hpaC), found in Salmonella typhimurium (strain LT2 / SGSC1412 / ATCC 700720).